A 78-amino-acid chain; its full sequence is Delta-conotoxin-like S6.8 (78 aa).

The first 22 residues, 1 to 22 (MKLTCMMIVAVLFLTAWTFVTA), serve as a signal peptide directing secretion. Positions 23–53 (DDSRNGLKNLFPKARHEMKNPDASKLNKRDG) are excised as a propeptide. 3 disulfide bridges follow: C54-C69, C61-C73, and C68-C77.

The protein belongs to the conotoxin O1 superfamily. As to expression, expressed by the venom duct.

It is found in the secreted. In terms of biological role, delta-conotoxins bind to site 6 of voltage-gated sodium channels (Nav) and inhibit the inactivation process. In Conus striatus (Striated cone), this protein is Delta-conotoxin-like S6.8.